The primary structure comprises 392 residues: MDKRSVRDLELRGKKVLVRVDFNVPVKGGEVTDDTRIRRALPTIRYLLQRGARVALISHLGRPKGEPDPRYRMDPVARRLEELLGEPVRKLDTATGPEVGRALEELERGVILLENSRFYPGETKNDPAFAAELAGPFDLYVNDAFGAAHRAHATTVGVAERLPAAAGFLLEQELDYLDGVLRSPERPFVAILGGAKVSDKLGVIESLLGVADRLLVGGAMCFTFLKARGLGVGASLVEDDYLGEARRLMEGAADRLVLPVDVVVAERMEEGARTRTVPVEEIPEGWMGLDIGPRTVELFRRHILQARTIFWNGPMGVFEIDAFARGTEGVARAVAESGATSVVGGGDSVAAVRKLGLEDRMSHISTGGGASLEYVEGRELPGVAVLPEREEV.

Residues D21–N23, R36, H59–R62, R117, and R150 each bind substrate. Residues K200, G288, E319, and G345 to S348 each bind ATP.

Belongs to the phosphoglycerate kinase family. Monomer.

Its subcellular location is the cytoplasm. The catalysed reaction is (2R)-3-phosphoglycerate + ATP = (2R)-3-phospho-glyceroyl phosphate + ADP. It functions in the pathway carbohydrate degradation; glycolysis; pyruvate from D-glyceraldehyde 3-phosphate: step 2/5. The chain is Phosphoglycerate kinase from Rubrobacter xylanophilus (strain DSM 9941 / JCM 11954 / NBRC 16129 / PRD-1).